The chain runs to 645 residues: Acetyl-coenzyme A synthetase (645 aa).

CoA is bound by residues 190–193 (RGGR) and threonine 308. ATP-binding positions include 384-386 (GEP), 408-413 (DTWWQT), aspartate 497, and arginine 512. CoA is bound at residue serine 520. Residue arginine 523 participates in ATP binding. Mg(2+) is bound by residues valine 534, histidine 536, and valine 539. Lysine 606 carries the N6-acetyllysine modification.

Belongs to the ATP-dependent AMP-binding enzyme family. Requires Mg(2+) as cofactor. Post-translationally, acetylated. Deacetylation by the SIR2-homolog deacetylase activates the enzyme.

It carries out the reaction acetate + ATP + CoA = acetyl-CoA + AMP + diphosphate. Catalyzes the conversion of acetate into acetyl-CoA (AcCoA), an essential intermediate at the junction of anabolic and catabolic pathways. AcsA undergoes a two-step reaction. In the first half reaction, AcsA combines acetate with ATP to form acetyl-adenylate (AcAMP) intermediate. In the second half reaction, it can then transfer the acetyl group from AcAMP to the sulfhydryl group of CoA, forming the product AcCoA. This is Acetyl-coenzyme A synthetase from Saccharophagus degradans (strain 2-40 / ATCC 43961 / DSM 17024).